The following is a 250-amino-acid chain: 2,3-bisphosphoglycerate-dependent phosphoglycerate mutase (250 aa).

Substrate is bound by residues arginine 8 to asparagine 15, threonine 21 to glycine 22, arginine 60, glutamate 87 to tyrosine 90, lysine 98, arginine 114 to arginine 115, and glycine 183 to asparagine 184. Histidine 9 serves as the catalytic Tele-phosphohistidine intermediate. Glutamate 87 acts as the Proton donor/acceptor in catalysis.

This sequence belongs to the phosphoglycerate mutase family. BPG-dependent PGAM subfamily. Homodimer.

The catalysed reaction is (2R)-2-phosphoglycerate = (2R)-3-phosphoglycerate. It functions in the pathway carbohydrate degradation; glycolysis; pyruvate from D-glyceraldehyde 3-phosphate: step 3/5. Its function is as follows. Catalyzes the interconversion of 2-phosphoglycerate and 3-phosphoglycerate. This is 2,3-bisphosphoglycerate-dependent phosphoglycerate mutase from Bordetella parapertussis (strain 12822 / ATCC BAA-587 / NCTC 13253).